The primary structure comprises 458 residues: Vacuolar basic amino acid transporter 3 (458 aa).

Over 1–9 (MNMLIVGRV) the chain is Cytoplasmic. A helical transmembrane segment spans residues 10–30 (VASVGGSGLQTLCFVIGCTMV). Residues 31–36 (GERSRP) are Vacuolar-facing. The chain crosses the membrane as a helical span at residues 37–57 (LVISILSCAFAVAAIVGPIIG). Over 58 to 67 (GAFTTHVTWR) the chain is Cytoplasmic. Residues 68–88 (WCFYINLPIGGLAIIMFLLTY) traverse the membrane as a helical segment. At 89–132 (KAENKGILQQIKDAIGTISSFTFSKFRHQVNFKRLMNGIIFKFD) the chain is on the vacuolar side. Residues 133-153 (FFGFALCSAGLVLFLLGLTFG) form a helical membrane-spanning segment. Topologically, residues 154–163 (GNKYSWNSGQ) are cytoplasmic. A helical transmembrane segment spans residues 164 to 184 (VIAYLVLGVLLFIFSLVYDFF). Residues 185-205 (LFDKFNPEPDNISYRPLLLRR) are Vacuolar-facing. Residue asparagine 195 is glycosylated (N-linked (GlcNAc...) asparagine). A helical transmembrane segment spans residues 206 to 226 (LVAKPAIIIINMVTFLLCTGY). Topologically, residues 227-248 (NGQMIYSVQFFQLIFASSAWKA) are cytoplasmic. The chain crosses the membrane as a helical span at residues 249 to 269 (GLHLIPIVITNVIAAIASGVI). Topologically, residues 270–277 (TKKLGLVK) are vacuolar. A helical transmembrane segment spans residues 278–298 (PLLIFGGVLGVIGAGLMTLMT). Topologically, residues 299–306 (NTSTKSTQ) are cytoplasmic. The helical transmembrane segment at 307–327 (IGVLLLPGFSLGFALQASLMS) threads the bilayer. At 328 to 415 (AQLQITKDRP…STIGNILSDS (88 aa)) the chain is on the vacuolar side. The chain crosses the membrane as a helical span at residues 416 to 436 (IKNVFWMDLGFYALGFLFCSF). The Cytoplasmic segment spans residues 437 to 458 (SSNKKLIIPKKDETPEDNLEDK).

Belongs to the major facilitator superfamily.

Its subcellular location is the vacuole membrane. Functionally, transporter required for vacuolar uptake of histidine and lysine. The sequence is that of Vacuolar basic amino acid transporter 3 (VBA3) from Saccharomyces cerevisiae (strain ATCC 204508 / S288c) (Baker's yeast).